Here is a 348-residue protein sequence, read N- to C-terminus: MKVGVVGASGYVGGETLRLLVNHPDVEIAAVTSRQHVGEYLHRVQPSLRGFTDLTFSELDYDRLSDSCDLVFTAVPHGTATDIVRALYDRDIKVIDLSADYRLHDPADYTKWYGWEHPHPDYLSKSVFGIPELHREEIRSAKLVSCPGCMAVTSILALAPPVREGLVDTEHIVVDSKIGSSGAGAGAGTAHAMRAGVIRPYKPAKHRHTGEIEQELSGIAGKKIRVSMSPHAVDVVRGILCTNHVFLTREASEKDLWKMYRQAYGEERFVRLIRDKKGLYKFPDPKFLVGSNFCDIGFDLDEDNNRLVAISASDNLMKGAAGSAIQNMNIMAGLDEMSGLRYTPLTPV.

9–12 (SGYV) is a binding site for NADP(+). Cys-149 is a catalytic residue. Asn-315 lines the NADP(+) pocket.

Belongs to the NAGSA dehydrogenase family. Type 1 subfamily. LysY sub-subfamily.

The protein resides in the cytoplasm. The catalysed reaction is [amino-group carrier protein]-C-terminal-N-(1-carboxy-5-oxopentan-1-yl)-L-glutamine + phosphate + NADP(+) = [amino-group carrier protein]-C-terminal-N-(1-carboxy-5-phosphooxy-5-oxopentan-1-yl)-L-glutamine + NADPH + H(+). The enzyme catalyses [amino-group carrier protein]-C-terminal-gamma-(L-glutamyl-5-semialdehyde)-L-glutamate + phosphate + NADP(+) = [amino-group carrier protein]-C-terminal-gamma-(5-phospho-L-glutamyl)-L-glutamate + NADPH + H(+). It participates in amino-acid biosynthesis; L-lysine biosynthesis via AAA pathway; L-lysine from L-alpha-aminoadipate (Thermus route): step 3/5. Its pathway is amino-acid biosynthesis; L-arginine biosynthesis. Functionally, involved in both the arginine and lysine biosynthetic pathways. This is Putative [LysW]-L-2-aminoadipate/[LysW]-L-glutamate phosphate reductase from Cenarchaeum symbiosum (strain A).